The primary structure comprises 96 residues: Co-chaperonin GroES (96 aa).

Belongs to the GroES chaperonin family. Heptamer of 7 subunits arranged in a ring. Interacts with the chaperonin GroEL.

The protein resides in the cytoplasm. Functionally, together with the chaperonin GroEL, plays an essential role in assisting protein folding. The GroEL-GroES system forms a nano-cage that allows encapsulation of the non-native substrate proteins and provides a physical environment optimized to promote and accelerate protein folding. GroES binds to the apical surface of the GroEL ring, thereby capping the opening of the GroEL channel. This chain is Co-chaperonin GroES, found in Myxococcus xanthus (strain DK1622).